Consider the following 222-residue polypeptide: Germin-like protein 11-1 (222 aa).

The first 23 residues, 1–23 (MKLSTVLCCYLLLLGLFAPEIIS), serve as a signal peptide directing secretion. Cysteines 32 and 49 form a disulfide. Positions 72-195 (DNMVRSSANI…AMFAPDSEVA (124 aa)) constitute a Cupin type-1 domain. His111, His113, Glu118, and His157 together coordinate Mn(2+).

The protein belongs to the germin family. As to quaternary structure, oligomer (believed to be a pentamer but probably hexamer).

Its subcellular location is the secreted. The protein localises to the extracellular space. It localises to the apoplast. Functionally, may play a role in plant defense. Probably has no oxalate oxidase activity even if the active site is conserved. This Oryza sativa subsp. japonica (Rice) protein is Germin-like protein 11-1.